A 432-amino-acid chain; its full sequence is tRNA modification GTPase MnmE (432 aa).

(6S)-5-formyl-5,6,7,8-tetrahydrofolate-binding residues include arginine 23, glutamate 85, and lysine 124. One can recognise a TrmE-type G domain in the interval 217–362 (GARLALIGAP…LKEAVREALL (146 aa)). Asparagine 227 is a binding site for K(+). GTP is bound by residues 227 to 232 (NAGKSS), 246 to 252 (SPIPGTT), and 271 to 274 (DTAG). Serine 231 is a Mg(2+) binding site. 3 residues coordinate K(+): serine 246, isoleucine 248, and threonine 251. Position 252 (threonine 252) interacts with Mg(2+). Residue lysine 432 participates in (6S)-5-formyl-5,6,7,8-tetrahydrofolate binding.

The protein belongs to the TRAFAC class TrmE-Era-EngA-EngB-Septin-like GTPase superfamily. TrmE GTPase family. In terms of assembly, homodimer. Heterotetramer of two MnmE and two MnmG subunits. K(+) serves as cofactor.

It localises to the cytoplasm. Exhibits a very high intrinsic GTPase hydrolysis rate. Involved in the addition of a carboxymethylaminomethyl (cmnm) group at the wobble position (U34) of certain tRNAs, forming tRNA-cmnm(5)s(2)U34. The chain is tRNA modification GTPase MnmE from Thermus thermophilus (strain ATCC 27634 / DSM 579 / HB8).